Here is a 457-residue protein sequence, read N- to C-terminus: Transcription factor CP2-like protein 1 (457 aa).

A mediate transcriptional repression region spans residues Met1 to Cys52. One can recognise a Grh/CP2 DB domain in the interval Arg43–Asn280. Disordered stretches follow at residues Lys219 to Tyr245 and Pro271 to Gly301. Basic and acidic residues predominate over residues Lys221–Tyr245. The SAM2-like domain stretch occupies residues Pro261–Arg365. Positions Pro271–Ser281 are enriched in polar residues.

The protein belongs to the grh/CP2 family. CP2 subfamily. As to quaternary structure, forms homohexamers via its SAM-like domain. Interacts with MTA1; which is indispensable for TFCP2L1-mediated self-renewal-promoting effect and endoderm-inhibiting action.

The protein localises to the nucleus. Functionally, transcription factor that facilitates establishment and maintenance of pluripotency in embryonic stem cells (ESCs). With KLF2, acts as the major effector of self-renewal that mediates induction of pluripotency downstream of LIF/STAT3 and Wnt/beta-catenin signaling. Required for normal duct development in the salivary gland and kidney. Coordinates the development of the kidney collecting ducts intercalated (IC) and principal (PC) cells, which regulate acid-base and salt-water homeostasis, respectively. Regulates the expression of IC genes including subunits B1 and D2 of the V-ATPase complex, OXGR1, CA12, SLC4A1, AQP6 and IC-specific transcription factor FOXI1. Also regulates the expression of JAG1 and subsequent notch signaling in the collecting duct. JAG1 initiates notch signaling in PCs but inhibits notch signaling in ICs. Acts as a transcriptional suppressor that may suppress UBP1-mediated transcriptional activation. Modulates the placental expression of CYP11A1. This chain is Transcription factor CP2-like protein 1 (TFCP2L1), found in Pongo abelii (Sumatran orangutan).